The primary structure comprises 488 residues: uncharacterized protein (488 aa).

27–38 (IVHFGFGAFHRA) contacts NAD(+).

It belongs to the mannitol dehydrogenase family. UxuB subfamily.

This is an uncharacterized protein from Escherichia coli (strain K12).